A 56-amino-acid polypeptide reads, in one-letter code: Large ribosomal subunit protein bL33 (56 aa).

The protein belongs to the bacterial ribosomal protein bL33 family.

The protein is Large ribosomal subunit protein bL33 of Ehrlichia ruminantium (strain Gardel).